Reading from the N-terminus, the 367-residue chain is FAD synthetase 2, chloroplastic (367 aa).

Residues Met1–Arg57 constitute a chloroplast transit peptide.

Mg(2+) is required as a cofactor.

It localises to the plastid. Its subcellular location is the chloroplast. The catalysed reaction is FMN + ATP + H(+) = FAD + diphosphate. It participates in cofactor biosynthesis; FAD biosynthesis; FAD from FMN: step 1/1. In terms of biological role, catalyzes the adenylation of flavin mononucleotide (FMN) to form flavin adenine dinucleotide (FAD) coenzyme. This is FAD synthetase 2, chloroplastic from Arabidopsis thaliana (Mouse-ear cress).